The sequence spans 60 residues: MLLGTTSAQVVRPGSCPNVDVPIPPLGLCRTTCQTDANCQEGRKCCKNGCGFMTCETARF.

The signal sequence occupies residues 1–8 (MLLGTTSA). The WAP domain occupies 9–59 (QVVRPGSCPNVDVPIPPLGLCRTTCQTDANCQEGRKCCKNGCGFMTCETAR). 4 disulfides stabilise this stretch: Cys-16-Cys-46, Cys-29-Cys-50, Cys-33-Cys-45, and Cys-39-Cys-55.

This sequence belongs to the venom waprin family. In terms of tissue distribution, expressed by the venom gland.

It is found in the secreted. Functionally, damages membranes of susceptible bacteria. Has no hemolytic activity. Not toxic to mice. Does not inhibit the proteinases elastase and cathepsin G. This Erythrolamprus poecilogyrus (Water snake) protein is Waprin-Lio1.